A 345-amino-acid polypeptide reads, in one-letter code: tRNA N6-adenosine threonylcarbamoyltransferase (345 aa).

His-111 and His-115 together coordinate Fe cation. Residues 134–138, Asp-167, Gly-180, Asp-184, and Asn-278 contribute to the substrate site; that span reads LVSGG. Asp-306 provides a ligand contact to Fe cation.

Belongs to the KAE1 / TsaD family. It depends on Fe(2+) as a cofactor.

It is found in the cytoplasm. It carries out the reaction L-threonylcarbamoyladenylate + adenosine(37) in tRNA = N(6)-L-threonylcarbamoyladenosine(37) in tRNA + AMP + H(+). In terms of biological role, required for the formation of a threonylcarbamoyl group on adenosine at position 37 (t(6)A37) in tRNAs that read codons beginning with adenine. Is involved in the transfer of the threonylcarbamoyl moiety of threonylcarbamoyl-AMP (TC-AMP) to the N6 group of A37, together with TsaE and TsaB. TsaD likely plays a direct catalytic role in this reaction. The protein is tRNA N6-adenosine threonylcarbamoyltransferase of Cyanothece sp. (strain PCC 7425 / ATCC 29141).